A 72-amino-acid polypeptide reads, in one-letter code: Large ribosomal subunit protein bL31 (72 aa).

Residues C16, C18, C38, and C41 each coordinate Zn(2+).

The protein belongs to the bacterial ribosomal protein bL31 family. Type A subfamily. In terms of assembly, part of the 50S ribosomal subunit. Zn(2+) is required as a cofactor.

Functionally, binds the 23S rRNA. This chain is Large ribosomal subunit protein bL31, found in Aliivibrio fischeri (strain ATCC 700601 / ES114) (Vibrio fischeri).